A 147-amino-acid polypeptide reads, in one-letter code: Large ribosomal subunit protein uL22c (147 aa).

Belongs to the universal ribosomal protein uL22 family. As to quaternary structure, part of the 50S ribosomal subunit.

The protein localises to the plastid. Its subcellular location is the chloroplast. This protein binds specifically to 23S rRNA. Functionally, the globular domain of the protein is located near the polypeptide exit tunnel on the outside of the subunit, while an extended beta-hairpin is found that lines the wall of the exit tunnel in the center of the 70S ribosome. The sequence is that of Large ribosomal subunit protein uL22c (rpl22) from Lolium perenne (Perennial ryegrass).